We begin with the raw amino-acid sequence, 610 residues long: Elongation factor 4 (610 aa).

One can recognise a tr-type G domain in the interval 14 to 196 (NRIRNFSIIA…ALVANIPPPK (183 aa)). Residues 26 to 31 (DHGKST) and 143 to 146 (NKID) contribute to the GTP site.

The protein belongs to the TRAFAC class translation factor GTPase superfamily. Classic translation factor GTPase family. LepA subfamily.

Its subcellular location is the cell inner membrane. The enzyme catalyses GTP + H2O = GDP + phosphate + H(+). Required for accurate and efficient protein synthesis under certain stress conditions. May act as a fidelity factor of the translation reaction, by catalyzing a one-codon backward translocation of tRNAs on improperly translocated ribosomes. Back-translocation proceeds from a post-translocation (POST) complex to a pre-translocation (PRE) complex, thus giving elongation factor G a second chance to translocate the tRNAs correctly. Binds to ribosomes in a GTP-dependent manner. This Legionella pneumophila (strain Paris) protein is Elongation factor 4.